Reading from the N-terminus, the 368-residue chain is tRNA-cytidine(32) 2-sulfurtransferase (368 aa).

Residues 95–100 (SGGKDS) carry the PP-loop motif motif. [4Fe-4S] cluster is bound by residues Cys170, Cys173, and Cys261.

It belongs to the TtcA family. As to quaternary structure, homodimer. Mg(2+) is required as a cofactor. [4Fe-4S] cluster serves as cofactor.

The protein localises to the cytoplasm. The catalysed reaction is cytidine(32) in tRNA + S-sulfanyl-L-cysteinyl-[cysteine desulfurase] + AH2 + ATP = 2-thiocytidine(32) in tRNA + L-cysteinyl-[cysteine desulfurase] + A + AMP + diphosphate + H(+). It functions in the pathway tRNA modification. Functionally, catalyzes the ATP-dependent 2-thiolation of cytidine in position 32 of tRNA, to form 2-thiocytidine (s(2)C32). The sulfur atoms are provided by the cysteine/cysteine desulfurase (IscS) system. The polypeptide is tRNA-cytidine(32) 2-sulfurtransferase (Psychrobacter sp. (strain PRwf-1)).